Here is a 287-residue protein sequence, read N- to C-terminus: Energy-coupling factor transporter ATP-binding protein EcfA2 (287 aa).

The 244-residue stretch at 3–246 (VKFSQVSYVY…TNYVNQLHLD (244 aa)) folds into the ABC transporter domain. 40–47 (GQTGSGKS) is an ATP binding site.

The protein belongs to the ABC transporter superfamily. Energy-coupling factor EcfA family. In terms of assembly, forms a stable energy-coupling factor (ECF) transporter complex composed of 2 membrane-embedded substrate-binding proteins (S component), 2 ATP-binding proteins (A component) and 2 transmembrane proteins (T component).

The protein resides in the cell membrane. In terms of biological role, ATP-binding (A) component of a common energy-coupling factor (ECF) ABC-transporter complex. Unlike classic ABC transporters this ECF transporter provides the energy necessary to transport a number of different substrates. The chain is Energy-coupling factor transporter ATP-binding protein EcfA2 from Staphylococcus saprophyticus subsp. saprophyticus (strain ATCC 15305 / DSM 20229 / NCIMB 8711 / NCTC 7292 / S-41).